The chain runs to 80 residues: Large ribosomal subunit protein bL31B (80 aa).

This sequence belongs to the bacterial ribosomal protein bL31 family. Type B subfamily. Part of the 50S ribosomal subunit.

This chain is Large ribosomal subunit protein bL31B, found in Oenococcus oeni (strain ATCC BAA-331 / PSU-1).